The chain runs to 344 residues: Selenide, water dikinase (344 aa).

The active site involves Cys16. ATP is bound by residues Lys19 and 47 to 49 (SRD). Asp50 contacts Mg(2+). ATP contacts are provided by residues Asp67, Asp90, and 138-140 (GHS). Residue Asp90 coordinates Mg(2+). Mg(2+) is bound at residue Asp226.

This sequence belongs to the selenophosphate synthase 1 family. Class I subfamily. Homodimer. It depends on Mg(2+) as a cofactor.

The enzyme catalyses hydrogenselenide + ATP + H2O = selenophosphate + AMP + phosphate + 2 H(+). Functionally, synthesizes selenophosphate from selenide and ATP. This Pseudomonas aeruginosa (strain ATCC 15692 / DSM 22644 / CIP 104116 / JCM 14847 / LMG 12228 / 1C / PRS 101 / PAO1) protein is Selenide, water dikinase.